Reading from the N-terminus, the 487-residue chain is MERWWFNSMLFKKEFERRCGLNKSMGSLGPIENTSEDPNRKVKNIHSCSNVDYLFGVKDIRNFISDDTFLVSDRNGDSYSIYFDIENQIFEIDNDHSFLSELESSFYSYRNSSYLNNGFRGEDPYYNSYMYDTQYSWNNHINSCIDNYLQSQICIDTSIISGSENYGDSYIYRTICGGESRNSSENEGSSKRTRTKGSDLTIRESSNDLEVTQKYRHLWVQCENCYGLNYKKFLKSKMNICEQCGYHLKMSSSDRIELLIDAGTWDPMDEDMVSLDPIEFHSEEEPYKDRIDSYQRKTGLTEAVQTGIGQLNGIPVAIGVMDFQFMGGSMGSVVGEKITRLIEHAANQILPLIIVCASGGARMQEGSLSLMQMAKISSALYDYQLNKKLFYVSILTSPTTGGVTASFGMLGDIIIAEPNAYIAFAGKRVIEQTLNKTVPEGSQAAEYLFQKGLFDQIVPRNLLKSVLSELFKLHAFFPLNQKSSKIK.

The tract at residues 180-201 (SRNSSENEGSSKRTRTKGSDLT) is disordered. Residues 218–487 (LWVQCENCYG…PLNQKSSKIK (270 aa)) form the CoA carboxyltransferase N-terminal domain. Zn(2+) is bound by residues C222, C225, C241, and C244. A C4-type zinc finger spans residues 222–244 (CENCYGLNYKKFLKSKMNICEQC).

Belongs to the AccD/PCCB family. In terms of assembly, acetyl-CoA carboxylase is a heterohexamer composed of biotin carboxyl carrier protein, biotin carboxylase and 2 subunits each of ACCase subunit alpha and ACCase plastid-coded subunit beta (accD). It depends on Zn(2+) as a cofactor.

Its subcellular location is the plastid. The protein localises to the chloroplast stroma. It catalyses the reaction N(6)-carboxybiotinyl-L-lysyl-[protein] + acetyl-CoA = N(6)-biotinyl-L-lysyl-[protein] + malonyl-CoA. Its pathway is lipid metabolism; malonyl-CoA biosynthesis; malonyl-CoA from acetyl-CoA: step 1/1. Component of the acetyl coenzyme A carboxylase (ACC) complex. Biotin carboxylase (BC) catalyzes the carboxylation of biotin on its carrier protein (BCCP) and then the CO(2) group is transferred by the transcarboxylase to acetyl-CoA to form malonyl-CoA. In Atropa belladonna (Belladonna), this protein is Acetyl-coenzyme A carboxylase carboxyl transferase subunit beta, chloroplastic.